Reading from the N-terminus, the 202-residue chain is Outer-membrane lipoprotein LolB (202 aa).

The N-terminal stretch at 1-24 (MESKEQHLIRQYFILAMFFLFLAG) is a signal peptide. The N-palmitoyl cysteine moiety is linked to residue C25. Residue C25 is the site of S-diacylglycerol cysteine attachment.

Belongs to the LolB family. In terms of assembly, monomer.

The protein resides in the cell outer membrane. Functionally, plays a critical role in the incorporation of lipoproteins in the outer membrane after they are released by the LolA protein. This Pseudoalteromonas translucida (strain TAC 125) protein is Outer-membrane lipoprotein LolB.